We begin with the raw amino-acid sequence, 164 residues long: Aspartic proteinase nepenthesin-1 (164 aa).

The Peptidase A1 domain occupies 17–164 (YLMXLSIGTP…VSFVSAQCGA (148 aa)). Residue D35 is part of the active site. Residue N93 is glycosylated (N-linked (GlcNAc...) asparagine).

This sequence belongs to the peptidase A1 family. Parenchymal cells surrounding the secretory glands.

It localises to the secreted. The catalysed reaction is Similar to pepsin, but also cleaves on either side of Asp and at Lys-|-Arg.. With respect to regulation, inhibited by pepstatin and by diazoacetyl-D,L-norleucine methyl ester (DAN) in the presence of Cu(2+) ions. Its function is as follows. Extracellular proteinase found in the pitcher fluid of carnivorous plants. Digest prey for nitrogen uptake. This is Aspartic proteinase nepenthesin-1 from Nepenthes distillatoria (Pitcher plant).